The sequence spans 102 residues: ATP synthase subunit c (102 aa).

A run of 2 helical transmembrane segments spans residues 34-54 and 80-100; these read IGAG…GYIF and AVSE…IFVA.

This sequence belongs to the ATPase C chain family. In terms of assembly, F-type ATPases have 2 components, F(1) - the catalytic core - and F(0) - the membrane proton channel. F(1) has five subunits: alpha(3), beta(3), gamma(1), delta(1), epsilon(1). F(0) has three main subunits: a(1), b(2) and c(10-14). The alpha and beta chains form an alternating ring which encloses part of the gamma chain. F(1) is attached to F(0) by a central stalk formed by the gamma and epsilon chains, while a peripheral stalk is formed by the delta and b chains.

Its subcellular location is the cell membrane. F(1)F(0) ATP synthase produces ATP from ADP in the presence of a proton or sodium gradient. F-type ATPases consist of two structural domains, F(1) containing the extramembraneous catalytic core and F(0) containing the membrane proton channel, linked together by a central stalk and a peripheral stalk. During catalysis, ATP synthesis in the catalytic domain of F(1) is coupled via a rotary mechanism of the central stalk subunits to proton translocation. Its function is as follows. Key component of the F(0) channel; it plays a direct role in translocation across the membrane. A homomeric c-ring of between 10-14 subunits forms the central stalk rotor element with the F(1) delta and epsilon subunits. This chain is ATP synthase subunit c, found in Mycoplasma genitalium (strain ATCC 33530 / DSM 19775 / NCTC 10195 / G37) (Mycoplasmoides genitalium).